Consider the following 241-residue polypeptide: Small ribosomal subunit protein uS2 (241 aa).

The protein belongs to the universal ribosomal protein uS2 family.

This chain is Small ribosomal subunit protein uS2, found in Yersinia enterocolitica serotype O:8 / biotype 1B (strain NCTC 13174 / 8081).